A 323-amino-acid chain; its full sequence is ATP synthase gamma chain (323 aa).

Belongs to the ATPase gamma chain family. As to quaternary structure, F-type ATPases have 2 components, CF(1) - the catalytic core - and CF(0) - the membrane proton channel. CF(1) has five subunits: alpha(3), beta(3), gamma(1), delta(1), epsilon(1). CF(0) has three main subunits: a, b and c.

Its subcellular location is the cell inner membrane. Produces ATP from ADP in the presence of a proton gradient across the membrane. The gamma chain is believed to be important in regulating ATPase activity and the flow of protons through the CF(0) complex. In Rickettsia peacockii (strain Rustic), this protein is ATP synthase gamma chain.